The sequence spans 213 residues: MEAFNTVTAIVAPLDRANVDTDAIIPKQFLKSIKRSGFGPNLFDEWRYLDQGQPGKSNEGRPLNKDFVLNLPRYAGARILLARDNFGCGSSREHAPWALQDFGFRVIIAPSFADIFFNNCFKNGILPIVQEASVVDSLFAEVAAQPGYQLTVDLPAQRITTPSGRSIAFEVDPFRKHCLIHGLDDIGLTLQHVADIQAYESKHKGQAPWAFLD.

Belongs to the LeuD family. LeuD type 1 subfamily. As to quaternary structure, heterodimer of LeuC and LeuD.

It catalyses the reaction (2R,3S)-3-isopropylmalate = (2S)-2-isopropylmalate. It participates in amino-acid biosynthesis; L-leucine biosynthesis; L-leucine from 3-methyl-2-oxobutanoate: step 2/4. In terms of biological role, catalyzes the isomerization between 2-isopropylmalate and 3-isopropylmalate, via the formation of 2-isopropylmaleate. In Magnetococcus marinus (strain ATCC BAA-1437 / JCM 17883 / MC-1), this protein is 3-isopropylmalate dehydratase small subunit.